Reading from the N-terminus, the 185-residue chain is MADDQFPGWHGTTIIGVKKGGEVVIAGDGQVSLGQTVIKGTARKVRRLSPGGYHVVAGFAGSTADAFTLLERLEAKLEATPGQLARASVELAKDWRTDKYLQKLEAMLIVSDGQDMFVITGAGDVLEPEHDVAAIGSGGNFALAAARAMMDSDKSAEEVARAAMAIAADICVYTNGNLTVEKIAK.

Thr-12 is a catalytic residue. Residues Ala-168, Cys-171, and Thr-174 each coordinate Na(+).

The protein belongs to the peptidase T1B family. HslV subfamily. A double ring-shaped homohexamer of HslV is capped on each side by a ring-shaped HslU homohexamer. The assembly of the HslU/HslV complex is dependent on binding of ATP.

The protein resides in the cytoplasm. The catalysed reaction is ATP-dependent cleavage of peptide bonds with broad specificity.. With respect to regulation, allosterically activated by HslU binding. Protease subunit of a proteasome-like degradation complex believed to be a general protein degrading machinery. The polypeptide is ATP-dependent protease subunit HslV (Ruegeria pomeroyi (strain ATCC 700808 / DSM 15171 / DSS-3) (Silicibacter pomeroyi)).